The primary structure comprises 162 residues: N5-carboxyaminoimidazole ribonucleotide mutase (162 aa).

Residues S11, D14, and R41 each coordinate substrate.

This sequence belongs to the AIR carboxylase family. Class I subfamily.

The enzyme catalyses 5-carboxyamino-1-(5-phospho-D-ribosyl)imidazole + H(+) = 5-amino-1-(5-phospho-D-ribosyl)imidazole-4-carboxylate. It participates in purine metabolism; IMP biosynthesis via de novo pathway; 5-amino-1-(5-phospho-D-ribosyl)imidazole-4-carboxylate from 5-amino-1-(5-phospho-D-ribosyl)imidazole (N5-CAIR route): step 2/2. Functionally, catalyzes the conversion of N5-carboxyaminoimidazole ribonucleotide (N5-CAIR) to 4-carboxy-5-aminoimidazole ribonucleotide (CAIR). This Brucella melitensis biotype 1 (strain ATCC 23456 / CCUG 17765 / NCTC 10094 / 16M) protein is N5-carboxyaminoimidazole ribonucleotide mutase.